The primary structure comprises 382 residues: Chaperone protein DnaJ (382 aa).

The J domain occupies Asp5–Gly70. The CR-type zinc finger occupies Gly141–Glu219. Residues Cys154, Cys157, Cys171, Cys174, Cys193, Cys196, Cys207, and Cys210 each coordinate Zn(2+). CXXCXGXG motif repeat units lie at residues Cys154–Gly161, Cys171–Gly178, Cys193–Gly200, and Cys207–Gly214.

Belongs to the DnaJ family. In terms of assembly, homodimer. Requires Zn(2+) as cofactor.

Its subcellular location is the cytoplasm. Functionally, participates actively in the response to hyperosmotic and heat shock by preventing the aggregation of stress-denatured proteins and by disaggregating proteins, also in an autonomous, DnaK-independent fashion. Unfolded proteins bind initially to DnaJ; upon interaction with the DnaJ-bound protein, DnaK hydrolyzes its bound ATP, resulting in the formation of a stable complex. GrpE releases ADP from DnaK; ATP binding to DnaK triggers the release of the substrate protein, thus completing the reaction cycle. Several rounds of ATP-dependent interactions between DnaJ, DnaK and GrpE are required for fully efficient folding. Also involved, together with DnaK and GrpE, in the DNA replication of plasmids through activation of initiation proteins. The polypeptide is Chaperone protein DnaJ (Cereibacter sphaeroides (strain ATCC 17029 / ATH 2.4.9) (Rhodobacter sphaeroides)).